The chain runs to 1682 residues: PHD and RING finger domain-containing protein 1 (1682 aa).

The interval 1–81 (MDDDNLDELV…SGSEDSEDGV (81 aa)) is disordered. Over residues 41–81 (DSEDDTGSEQDDDTDGEETEGLSEEEDPEDRSGSEDSEDGV) the composition is skewed to acidic residues. The RING-type; degenerate zinc finger occupies 109–150 (CPICLNAFRDQAVGTPETCAHYFCLDCIIEWSRNANSCPVDR). Residues 185–235 (PTFCEVCGRSDREDRLLLCDGCDAGYHMECLDPPLQEVPVDEWFCPECTVP) form a PHD-type zinc finger. Disordered regions lie at residues 330-412 (PLTP…SMPS), 444-483 (PFDS…PVAM), 532-582 (SLSA…RQPN), 605-774 (VRSD…GSSF), and 825-856 (LKSE…GLLP). Thr332 bears the Phosphothreonine mark. 2 stretches are compositionally biased toward basic residues: residues 336 to 361 (PAKR…RSSV) and 369 to 384 (RAKK…KGRK). Phosphoserine is present on residues Ser447 and Ser457. Polar residues-rich tracts occupy residues 609–620 (PSLTPRSGLSRT), 630–667 (THSS…SGLP), and 734–748 (SSRG…TSGS). The span at 832–856 (PFDPTGSDSSPPSSSPESLGPGLLP) shows a compositional bias: low complexity. 7 positions are modified to phosphoserine: Ser845, Ser846, Ser864, Ser867, Ser919, Ser982, and Ser1000. Disordered regions lie at residues 911–1225 (SKGS…VSEV) and 1288–1322 (DDMS…PQDS). A compositionally biased stretch (acidic residues) spans 919 to 931 (SDLEQEGLGEIEP). Residues 999 to 1008 (SSRSRSTSSS) are compositionally biased toward low complexity. 2 stretches are compositionally biased toward basic residues: residues 1009-1030 (RSRK…RTRS) and 1053-1063 (RRHRAKTKSRR). A compositionally biased stretch (basic and acidic residues) spans 1064-1090 (SSSDRASSQDRAKRRKDRDDRDREHRR). Composition is skewed to basic residues over residues 1091–1104 (GSWG…KSRS) and 1119–1129 (SKRRKRRHSGS). Position 1135 is a phosphoserine (Ser1135). Basic and acidic residues-rich tracts occupy residues 1147-1161 (RSRE…VTRS) and 1182-1197 (PSRE…KGPV). Residue Ser1201 is modified to Phosphoserine. Residues 1288-1301 (DDMSSPPSPESTDS) show a composition bias toward low complexity. Over residues 1308-1317 (PPNPILPPAS) the composition is skewed to pro residues. 2 positions are modified to phosphoserine: Ser1368 and Ser1379. Thr1412 carries the post-translational modification Phosphothreonine. Disordered stretches follow at residues 1419 to 1445 (EHST…EGDW), 1463 to 1496 (LPPP…PAAG), 1567 to 1588 (AVPT…AEKT), and 1663 to 1682 (MRRH…GAET). Residues 1574–1588 (SEERTATPKTAAEKT) are compositionally biased toward basic and acidic residues. The stretch at 1585-1612 (AEKTKKEEYMKKLHMQERAVEEVKLAIK) forms a coiled coil.

In terms of assembly, interacts with POLR2A (via the C-terminal domain).

The protein is PHD and RING finger domain-containing protein 1 of Mus musculus (Mouse).